We begin with the raw amino-acid sequence, 310 residues long: Acetaldehyde dehydrogenase 1 (310 aa).

12 to 15 lines the NAD(+) pocket; the sequence is SGNI. The active-site Acyl-thioester intermediate is Cys-132. NAD(+) contacts are provided by residues 163–171 and Asn-287; that span reads SAGPGTRAN.

Belongs to the acetaldehyde dehydrogenase family.

It carries out the reaction acetaldehyde + NAD(+) + CoA = acetyl-CoA + NADH + H(+). The sequence is that of Acetaldehyde dehydrogenase 1 from Pseudomonas putida (strain W619).